The chain runs to 348 residues: Dihydroorotase (348 aa).

H13 and H15 together coordinate Zn(2+). Residues H15–R17 and N41 each bind substrate. The Zn(2+) site is built by K99, H136, and H174. The residue at position 99 (K99) is an N6-carboxylysine. H136 provides a ligand contact to substrate. L219 lines the substrate pocket. D247 contributes to the Zn(2+) binding site. D247 is a catalytic residue. Residues H251 and A263 each contribute to the substrate site.

The protein belongs to the metallo-dependent hydrolases superfamily. DHOase family. Class II DHOase subfamily. Homodimer. Zn(2+) is required as a cofactor.

The catalysed reaction is (S)-dihydroorotate + H2O = N-carbamoyl-L-aspartate + H(+). It participates in pyrimidine metabolism; UMP biosynthesis via de novo pathway; (S)-dihydroorotate from bicarbonate: step 3/3. Functionally, catalyzes the reversible cyclization of carbamoyl aspartate to dihydroorotate. The sequence is that of Dihydroorotase from Coxiella burnetii (strain RSA 331 / Henzerling II).